Here is an 886-residue protein sequence, read N- to C-terminus: uncharacterized protein (886 aa).

The N-terminal stretch at 1-20 (MKILKSLVLLVLFIVMPAKA) is a signal peptide. 6 helical membrane-spanning segments follow: residues 520–540 (VIIF…IEVI), 563–583 (TYFF…VVGA), 609–629 (LLFI…IITI), 647–667 (IIAF…IILM), 680–700 (ISTL…FLLI), and 771–791 (FLVL…SYGL).

The protein belongs to the TrbL/VirB6 family.

It localises to the cell membrane. This is an uncharacterized protein from Rickettsia typhi (strain ATCC VR-144 / Wilmington).